The primary structure comprises 226 residues: N-(5'-phosphoribosyl)anthranilate isomerase 2 (226 aa).

This sequence belongs to the TrpF family.

The enzyme catalyses N-(5-phospho-beta-D-ribosyl)anthranilate = 1-(2-carboxyphenylamino)-1-deoxy-D-ribulose 5-phosphate. The protein operates within amino-acid biosynthesis; L-tryptophan biosynthesis; L-tryptophan from chorismate: step 3/5. This Methanosarcina mazei (strain ATCC BAA-159 / DSM 3647 / Goe1 / Go1 / JCM 11833 / OCM 88) (Methanosarcina frisia) protein is N-(5'-phosphoribosyl)anthranilate isomerase 2 (trpF2).